Here is a 461-residue protein sequence, read N- to C-terminus: Photosystem II CP43 reaction center protein (461 aa).

The propeptide occupies 1-2 (ME). An N-acetylthreonine modification is found at Thr3. Residue Thr3 is modified to Phosphothreonine. 5 consecutive transmembrane segments (helical) span residues 57–81 (LFEV…PHIA), 122–143 (LIGP…KDKN), 166–188 (KAMY…RIIT), 243–263 (TPWP…LSYS), and 279–300 (WFNN…ASQA). Position 355 (Glu355) interacts with [CaMn4O5] cluster. The helical transmembrane segment at 435-459 (RARAAAAGFEKGIDRVDEPVLSMRP) threads the bilayer.

It belongs to the PsbB/PsbC family. PsbC subfamily. In terms of assembly, PSII is composed of 1 copy each of membrane proteins PsbA, PsbB, PsbC, PsbD, PsbE, PsbF, PsbH, PsbI, PsbJ, PsbK, PsbL, PsbM, PsbT, PsbX, PsbY, PsbZ, Psb30/Ycf12, at least 3 peripheral proteins of the oxygen-evolving complex and a large number of cofactors. It forms dimeric complexes. Requires Binds multiple chlorophylls and provides some of the ligands for the Ca-4Mn-5O cluster of the oxygen-evolving complex. It may also provide a ligand for a Cl- that is required for oxygen evolution. PSII binds additional chlorophylls, carotenoids and specific lipids. as cofactor.

The protein localises to the plastid. Its subcellular location is the chloroplast thylakoid membrane. One of the components of the core complex of photosystem II (PSII). It binds chlorophyll and helps catalyze the primary light-induced photochemical processes of PSII. PSII is a light-driven water:plastoquinone oxidoreductase, using light energy to abstract electrons from H(2)O, generating O(2) and a proton gradient subsequently used for ATP formation. The chain is Photosystem II CP43 reaction center protein from Chlamydomonas moewusii (Chlamydomonas eugametos).